The following is a 95-amino-acid chain: MKKYEIMYILRPNLDSKDVKKINDTLQNVFLQAPNQILEQNEIGLKDLAYLIDNHKKGYYNWLMVKADNDAVLEFNRIVKITEEIIRFIFIKDKE.

The protein belongs to the bacterial ribosomal protein bS6 family.

In terms of biological role, binds together with bS18 to 16S ribosomal RNA. This Onion yellows phytoplasma (strain OY-M) protein is Small ribosomal subunit protein bS6.